The sequence spans 290 residues: Acetylglutamate kinase (290 aa).

Residues 60-61 (GG), arginine 82, and asparagine 187 contribute to the substrate site.

This sequence belongs to the acetylglutamate kinase family. ArgB subfamily.

Its subcellular location is the cytoplasm. The enzyme catalyses N-acetyl-L-glutamate + ATP = N-acetyl-L-glutamyl 5-phosphate + ADP. It functions in the pathway amino-acid biosynthesis; L-arginine biosynthesis; N(2)-acetyl-L-ornithine from L-glutamate: step 2/4. Catalyzes the ATP-dependent phosphorylation of N-acetyl-L-glutamate. This chain is Acetylglutamate kinase, found in Marinobacter nauticus (strain ATCC 700491 / DSM 11845 / VT8) (Marinobacter aquaeolei).